We begin with the raw amino-acid sequence, 518 residues long: Sodium-dependent glucose transporter 1 (518 aa).

12 helical membrane-spanning segments follow: residues 19–39 (TFQDLATNVNRNISSLSFIFV), 53–73 (GFLVDVMNYFLLLGISMSATT), 82–102 (CKTAILLTVMMSIFGVSIGIL), 107–127 (NVLILAIWGDKGAPHMQALHF), 139–159 (LAKLALGPTASAENHTESDFH), 221–241 (FRRAKYHNALLCLLFLFFFFY), 307–327 (TSSLFLVLFDKNPICLWIATS), 347–367 (YTTIHGKSAAFFVIGASLGEM), 376–396 (LQGKYPDLPVVLYTSLGASIA), 400–420 (LFPVLYKLATSPLDRQRKEDR), 438–458 (EEENEEEDAEKWNEMDFEMIE), and 466–486 (SIIETSRSSLTEPTAEVYNQY). A compositionally biased stretch (basic and acidic residues) spans 414–426 (RQRKEDRKSEDQK). A disordered region spans residues 414 to 448 (RQRKEDRKSEDQKALLSSSGLNEYEEENEEEDAEK). Acidic residues predominate over residues 436 to 448 (EYEEENEEEDAEK).

Belongs to the major facilitator superfamily.

It localises to the apical cell membrane. Its function is as follows. May function as a sodium-dependent glucose transporter. Potential channels for urea in the inner medulla of kidney. This Homo sapiens (Human) protein is Sodium-dependent glucose transporter 1.